The primary structure comprises 216 residues: Molybdenum cofactor guanylyltransferase (216 aa).

Residues 16 to 18 (LAG), K28, N57, D73, and D108 contribute to the GTP site. D108 is a binding site for Mg(2+).

Belongs to the MobA family. Monomer. Mg(2+) serves as cofactor.

It is found in the cytoplasm. The enzyme catalyses Mo-molybdopterin + GTP + H(+) = Mo-molybdopterin guanine dinucleotide + diphosphate. In terms of biological role, transfers a GMP moiety from GTP to Mo-molybdopterin (Mo-MPT) cofactor (Moco or molybdenum cofactor) to form Mo-molybdopterin guanine dinucleotide (Mo-MGD) cofactor. This chain is Molybdenum cofactor guanylyltransferase, found in Rhizobium rhizogenes (strain K84 / ATCC BAA-868) (Agrobacterium radiobacter).